We begin with the raw amino-acid sequence, 161 residues long: Ribosome maturation factor RimP (161 aa).

This sequence belongs to the RimP family.

Its subcellular location is the cytoplasm. Its function is as follows. Required for maturation of 30S ribosomal subunits. This Rickettsia typhi (strain ATCC VR-144 / Wilmington) protein is Ribosome maturation factor RimP.